Here is a 160-residue protein sequence, read N- to C-terminus: Large ribosomal subunit protein uL11 (160 aa).

This sequence belongs to the universal ribosomal protein uL11 family. Part of the ribosomal stalk of the 50S ribosomal subunit. Interacts with L10 and the large rRNA to form the base of the stalk. L10 forms an elongated spine to which L12 dimers bind in a sequential fashion forming a multimeric L10(L12)X complex.

Its function is as follows. Forms part of the ribosomal stalk which helps the ribosome interact with GTP-bound translation factors. This chain is Large ribosomal subunit protein uL11, found in Methanococcus aeolicus (strain ATCC BAA-1280 / DSM 17508 / OCM 812 / Nankai-3).